We begin with the raw amino-acid sequence, 457 residues long: ATP synthase subunit beta (457 aa).

147–154 (GGAGVGKT) is a binding site for ATP.

Belongs to the ATPase alpha/beta chains family. In terms of assembly, F-type ATPases have 2 components, CF(1) - the catalytic core - and CF(0) - the membrane proton channel. CF(1) has five subunits: alpha(3), beta(3), gamma(1), delta(1), epsilon(1). CF(0) has three main subunits: a(1), b(2) and c(9-12). The alpha and beta chains form an alternating ring which encloses part of the gamma chain. CF(1) is attached to CF(0) by a central stalk formed by the gamma and epsilon chains, while a peripheral stalk is formed by the delta and b chains.

It is found in the cell inner membrane. The enzyme catalyses ATP + H2O + 4 H(+)(in) = ADP + phosphate + 5 H(+)(out). Its function is as follows. Produces ATP from ADP in the presence of a proton gradient across the membrane. The catalytic sites are hosted primarily by the beta subunits. The protein is ATP synthase subunit beta of Actinobacillus pleuropneumoniae serotype 5b (strain L20).